Reading from the N-terminus, the 248-residue chain is 2,3-bisphosphoglycerate-dependent phosphoglycerate mutase (248 aa).

Residues 8–15 (RHGESEWN), 21–22 (TG), arginine 60, 87–90 (ERHY), lysine 98, 114–115 (RR), and 183–184 (GN) contribute to the substrate site. Histidine 9 (tele-phosphohistidine intermediate) is an active-site residue. The active-site Proton donor/acceptor is the glutamate 87.

This sequence belongs to the phosphoglycerate mutase family. BPG-dependent PGAM subfamily.

The enzyme catalyses (2R)-2-phosphoglycerate = (2R)-3-phosphoglycerate. The protein operates within carbohydrate degradation; glycolysis; pyruvate from D-glyceraldehyde 3-phosphate: step 3/5. Its function is as follows. Catalyzes the interconversion of 2-phosphoglycerate and 3-phosphoglycerate. This chain is 2,3-bisphosphoglycerate-dependent phosphoglycerate mutase, found in Coprothermobacter proteolyticus (strain ATCC 35245 / DSM 5265 / OCM 4 / BT).